The following is a 1031-amino-acid chain: GTPase activating protein Gyp51 (1031 aa).

A compositionally biased stretch (basic and acidic residues) spans 1 to 32; it reads MAFTEANEREVQSSYEKENVKIIREEEAKDQE. Disordered stretches follow at residues 1–229, 278–317, 339–371, 420–459, and 490–520; these read MAFT…TNVN, FIEQNGPNSDTVSGFKETSSIVNSSSTTEKPGVALDSQND, DHLPENVESEPVAGKENETAKNESGASDNDHKA, NDELSASGSQEPHPKDGTNSTSSLPLDTNNLSNSEPPSHV, and KKNTAFSPGTSLSTNHVKTKSRSAHNNSTSP. Residues 43–59 are compositionally biased toward polar residues; the sequence is TGTSPDLNFFSTQNVMQ. The segment covering 62–78 has biased composition (acidic residues); that stretch reads FEDEYSEFSNEDDEAEI. Residues 105-117 show a composition bias toward polar residues; that stretch reads SQQSVEEQNNTTN. The segment covering 195 to 217 has biased composition (basic and acidic residues); that stretch reads EDLKDEVKSVHEFNEPNDLRQQE. The segment covering 219-229 has biased composition (acidic residues); it reads SYSDDDDTNVN. Polar residues predominate over residues 278–306; that stretch reads FIEQNGPNSDTVSGFKETSSIVNSSSTTE. Composition is skewed to polar residues over residues 420–429, 436–455, and 493–505; these read NDELSASGSQ, GTNSTSSLPLDTNNLSNSEP, and TAFSPGTSLSTNH. The 197-residue stretch at 610–806 folds into the Rab-GAP TBC domain; the sequence is HNSHTVHTVV…HLYDILFLYG (197 aa). A helical transmembrane segment spans residues 798 to 818; sequence LYDILFLYGPGILFNFGLALL.

The protein belongs to the GYP5 family.

It is found in the membrane. It localises to the cytoplasm. GTPase-activating protein involved in ER to Golgi trafficking and polarized exocytosis. The sequence is that of GTPase activating protein Gyp51 (gyp51) from Schizosaccharomyces pombe (strain 972 / ATCC 24843) (Fission yeast).